Reading from the N-terminus, the 504-residue chain is ATP synthase subunit alpha 2 (504 aa).

169 to 176 (GDRQTGKT) contributes to the ATP binding site.

This sequence belongs to the ATPase alpha/beta chains family. In terms of assembly, F-type ATPases have 2 components, CF(1) - the catalytic core - and CF(0) - the membrane proton channel. CF(1) has five subunits: alpha(3), beta(3), gamma(1), delta(1), epsilon(1). CF(0) has three main subunits: a(1), b(2) and c(9-12). The alpha and beta chains form an alternating ring which encloses part of the gamma chain. CF(1) is attached to CF(0) by a central stalk formed by the gamma and epsilon chains, while a peripheral stalk is formed by the delta and b chains.

It is found in the cell membrane. It catalyses the reaction ATP + H2O + 4 H(+)(in) = ADP + phosphate + 5 H(+)(out). In terms of biological role, produces ATP from ADP in the presence of a proton gradient across the membrane. The alpha chain is a regulatory subunit. This chain is ATP synthase subunit alpha 2, found in Listeria monocytogenes serotype 4b (strain F2365).